The following is a 201-amino-acid chain: MEWVWALVLLAALGGGSAERDCRVSSFRVKENFDKARFSGLWYAIAKKDPEGLFLQDNIIAEFSVDEKGHMSATAKGRVRLLSNWEVCADMVGTFTDTEDPAKFKMKYWGVASFLQRGNDDHWIIDTDYDTFALQYSCRLQNLDGTCADSYSFVFSRDPNGLTPETRRLVRQRQEELCLERQYRWIEHNGYCQSRPSRNSL.

The signal sequence occupies residues 1–18 (MEWVWALVLLAALGGGSA). Disulfide bonds link cysteine 22/cysteine 178, cysteine 88/cysteine 192, and cysteine 138/cysteine 147. Glutamine 116 serves as a coordination point for substrate. Arginine 139 is subject to Omega-N-methylarginine.

The protein belongs to the calycin superfamily. Lipocalin family. In terms of assembly, interacts with TTR. Interaction with TTR prevents its loss by filtration through the kidney glomeruli. Interacts with STRA6. As to expression, detected in blood plasma (at protein level).

The protein localises to the secreted. Its function is as follows. Retinol-binding protein that mediates retinol transport in blood plasma. Delivers retinol from the liver stores to the peripheral tissues. Transfers the bound all-trans retinol to STRA6, that then facilitates retinol transport across the cell membrane. The sequence is that of Retinol-binding protein 4 (Rbp4) from Rattus norvegicus (Rat).